Consider the following 424-residue polypeptide: Serine--tRNA ligase (424 aa).

Position 230–232 (230–232 (TAE)) interacts with L-serine. 261-263 (RAE) provides a ligand contact to ATP. Glutamate 284 is an L-serine binding site. 348-351 (EISS) lines the ATP pocket. Residue serine 384 participates in L-serine binding.

This sequence belongs to the class-II aminoacyl-tRNA synthetase family. Type-1 seryl-tRNA synthetase subfamily. In terms of assembly, homodimer. The tRNA molecule binds across the dimer.

The protein localises to the cytoplasm. It carries out the reaction tRNA(Ser) + L-serine + ATP = L-seryl-tRNA(Ser) + AMP + diphosphate + H(+). It catalyses the reaction tRNA(Sec) + L-serine + ATP = L-seryl-tRNA(Sec) + AMP + diphosphate + H(+). Its pathway is aminoacyl-tRNA biosynthesis; selenocysteinyl-tRNA(Sec) biosynthesis; L-seryl-tRNA(Sec) from L-serine and tRNA(Sec): step 1/1. Functionally, catalyzes the attachment of serine to tRNA(Ser). Is also able to aminoacylate tRNA(Sec) with serine, to form the misacylated tRNA L-seryl-tRNA(Sec), which will be further converted into selenocysteinyl-tRNA(Sec). This is Serine--tRNA ligase from Carboxydothermus hydrogenoformans (strain ATCC BAA-161 / DSM 6008 / Z-2901).